A 113-amino-acid chain; its full sequence is Hydrogenase maturation factor HypA (113 aa).

Histidine 2 provides a ligand contact to Ni(2+). The Zn(2+) site is built by cysteine 73, cysteine 76, cysteine 89, and cysteine 92.

This sequence belongs to the HypA/HybF family.

Functionally, involved in the maturation of [NiFe] hydrogenases. Required for nickel insertion into the metal center of the hydrogenase. This is Hydrogenase maturation factor HypA from Prosthecochloris aestuarii (strain DSM 271 / SK 413).